The chain runs to 503 residues: METKQERETGRSSPDPSPRKLIRRAATWEISDSDNEEETNKPQTESRKGPIVNIEATDQLLGVQKDPAQQPDVEEKTKNLVLPPPTSTTPSPTRRSRKKKTPEQVAAEQEQAEEKKRQRELKRQEKAQKKELEKIERERRKETNLALKLLRPDQCGKYMVVKVDAGLLEDAGSEDVLEALRVAEYNYSIEPHSVPQSISWRREMPADWTCIEGMDMKEEEEDQLLVLVEPKSYLSSVRTYAQAPYYFCVGNEMEEIPGSVFSIPAKNPHKKVTLVIIGLQEYRWCERLSRQIQRQSLDAAEGRDSNKDQSATRATRQQIQEALVFLQLHYNTEVLCLDTWKELGQHVCAVTKSIAQRPFRKHWEAQTFSFCTSAGSWRGWGPRGVLTGLPLTWRRQIQQLNRVSPAMAAVVSQAYPSPQLLMQAYSACGSDRERMSLLTDLRIPQDNNTGVTQKAEDPREVADIAQEGDQVPGRERRIGPDLSRRIWLLMTSKNPELVLDLNS.

Composition is skewed to basic and acidic residues over residues 1 to 10, 38 to 48, and 112 to 135; these read METKQERETG, ETNKPQTESRK, and AEEKKRQRELKRQEKAQKKELEKI. Residues 1-135 form a disordered region; that stretch reads METKQERETG…KAQKKELEKI (135 aa). Residues 70 to 366 form a nuclease-like domain; forms the post-nick DNA binding interface and is involved in DNA recognition and bending region; sequence QPDVEEKTKN…RPFRKHWEAQ (297 aa). Residues 103–151 are a coiled coil; sequence EQVAAEQEQAEEKKRQRELKRQEKAQKKELEKIERERRKETNLALKLLR. The segment at 388 to 503 is helix-hairpin-helix (2HhH); forms the pre-nick DNA binding interface and is involved in DNA recognition and bending; that stretch reads GLPLTWRRQI…NPELVLDLNS (116 aa).

Belongs to the EME1/MMS4 family. As to quaternary structure, part of the heterodimeric MUS81-EME2 complex; the complex forms specifically during the DNA replication phase of the cell cycle.

It is found in the nucleus. In terms of biological role, non-catalytic subunit of the structure-specific, heterodimeric DNA endonuclease MUS81-EME2 which is involved in the maintenance of genome stability. In the complex, EME2 is required for DNA cleavage, participating in DNA recognition and bending. MUS81-EME2 cleaves 3'-flaps and nicked Holliday junctions, and exhibit limited endonuclease activity with 5' flaps and nicked double-stranded DNAs. MUS81-EME2 which is active during the replication of DNA is more specifically involved in replication fork processing. Replication forks frequently encounter obstacles to their passage, including DNA base lesions, DNA interstrand cross-links, difficult-to-replicate sequences, transcription bubbles, or tightly bound proteins. One mechanism for the restart of a stalled replication fork involves nucleolytic cleavage mediated by the MUS81-EME2 endonuclease. By acting upon the stalled fork, MUS81-EME2 generates a DNA double-strand break (DSB) that can be repaired by homologous recombination, leading to the restoration of an active fork. MUS81-EME2 could also function in telomere maintenance. This Xenopus tropicalis (Western clawed frog) protein is Structure-specific endonuclease subunit EME2 (eme2).